The chain runs to 212 residues: uncharacterized protein (212 aa).

Pentapeptide repeat domains follow at residues 63–102, 103–142, and 143–182; these read VSFRHIELTDVIFEKCDLSNADFSGAVIHRTSVKQSKMVG, MNVAEATLRNVSFEECHGHFSSFSYSNMKQVRFDHCALMQ, and SECSDTVLQQTHFDGCELEGASFTGTSLQNMDISTCRFEQ.

This is an uncharacterized protein from Bacillus subtilis (strain 168).